The chain runs to 307 residues: Lipoyl synthase (307 aa).

7 residues coordinate [4Fe-4S] cluster: Cys55, Cys60, Cys66, Cys81, Cys85, Cys88, and Ser292. Residues 67–281 enclose the Radical SAM core domain; that stretch reads WEDREATFLI…ARHAEELGFS (215 aa).

The protein belongs to the radical SAM superfamily. Lipoyl synthase family. [4Fe-4S] cluster is required as a cofactor.

It is found in the cytoplasm. The enzyme catalyses [[Fe-S] cluster scaffold protein carrying a second [4Fe-4S](2+) cluster] + N(6)-octanoyl-L-lysyl-[protein] + 2 oxidized [2Fe-2S]-[ferredoxin] + 2 S-adenosyl-L-methionine + 4 H(+) = [[Fe-S] cluster scaffold protein] + N(6)-[(R)-dihydrolipoyl]-L-lysyl-[protein] + 4 Fe(3+) + 2 hydrogen sulfide + 2 5'-deoxyadenosine + 2 L-methionine + 2 reduced [2Fe-2S]-[ferredoxin]. It participates in protein modification; protein lipoylation via endogenous pathway; protein N(6)-(lipoyl)lysine from octanoyl-[acyl-carrier-protein]: step 2/2. Functionally, catalyzes the radical-mediated insertion of two sulfur atoms into the C-6 and C-8 positions of the octanoyl moiety bound to the lipoyl domains of lipoate-dependent enzymes, thereby converting the octanoylated domains into lipoylated derivatives. In Mycobacterium avium (strain 104), this protein is Lipoyl synthase.